A 275-amino-acid chain; its full sequence is MSNLQSIIEAAFERRAEITPKTVDAQTKAAIEEVIAGLDCGKYRVAEKIDGDWVTHQWLKKAVLLSFRINDNQLIDGAETKYYDKVALKFADYTEERFQQEGFRVVPSATVRKGAYIAKNTVLMPSYVNIGAFVDEGTMVDTWVTVGSCAQIGKNVHLSGGVGIGGVLEPLQANPTIIGDNCFIGARSEIVEGVIVEDGCVISMGVFIGQSTKIYDRETGEVHYGRVPAGSVVVSGSLPSKDGSHSLYCAVIVKKVDAKTLGKVGLNELLRTIEE.

Residues Arg-104 and Asp-141 each coordinate substrate.

The protein belongs to the transferase hexapeptide repeat family. Homotrimer.

Its subcellular location is the cytoplasm. The enzyme catalyses (S)-2,3,4,5-tetrahydrodipicolinate + succinyl-CoA + H2O = (S)-2-succinylamino-6-oxoheptanedioate + CoA. The protein operates within amino-acid biosynthesis; L-lysine biosynthesis via DAP pathway; LL-2,6-diaminopimelate from (S)-tetrahydrodipicolinate (succinylase route): step 1/3. The polypeptide is 2,3,4,5-tetrahydropyridine-2,6-dicarboxylate N-succinyltransferase (Mannheimia succiniciproducens (strain KCTC 0769BP / MBEL55E)).